The chain runs to 597 residues: Elongation factor 4 (597 aa).

The tr-type G domain maps to 2 to 184 (QHIRNFSIIA…TIVARVPAPQ (183 aa)). Residues 14-19 (DHGKST) and 131-134 (NKMD) each bind GTP.

Belongs to the TRAFAC class translation factor GTPase superfamily. Classic translation factor GTPase family. LepA subfamily.

The protein localises to the cell inner membrane. It catalyses the reaction GTP + H2O = GDP + phosphate + H(+). Functionally, required for accurate and efficient protein synthesis under certain stress conditions. May act as a fidelity factor of the translation reaction, by catalyzing a one-codon backward translocation of tRNAs on improperly translocated ribosomes. Back-translocation proceeds from a post-translocation (POST) complex to a pre-translocation (PRE) complex, thus giving elongation factor G a second chance to translocate the tRNAs correctly. Binds to ribosomes in a GTP-dependent manner. In Bordetella petrii (strain ATCC BAA-461 / DSM 12804 / CCUG 43448), this protein is Elongation factor 4.